Reading from the N-terminus, the 562-residue chain is Serine palmitoyltransferase 2 (562 aa).

The helical transmembrane segment at 61–81 (LITYLNYLILIILGHIHDFLG) threads the bilayer. Lys365 is modified (N6-(pyridoxal phosphate)lysine).

Belongs to the class-II pyridoxal-phosphate-dependent aminotransferase family. It depends on pyridoxal 5'-phosphate as a cofactor.

The protein localises to the membrane. It carries out the reaction L-serine + hexadecanoyl-CoA + H(+) = 3-oxosphinganine + CO2 + CoA. It functions in the pathway lipid metabolism; sphingolipid metabolism. This chain is Serine palmitoyltransferase 2 (LCB2), found in Kluyveromyces lactis (strain ATCC 8585 / CBS 2359 / DSM 70799 / NBRC 1267 / NRRL Y-1140 / WM37) (Yeast).